A 502-amino-acid polypeptide reads, in one-letter code: ATP synthase subunit alpha (502 aa).

An ATP-binding site is contributed by 169–176 (GDRQTGKT).

Belongs to the ATPase alpha/beta chains family. In terms of assembly, F-type ATPases have 2 components, CF(1) - the catalytic core - and CF(0) - the membrane proton channel. CF(1) has five subunits: alpha(3), beta(3), gamma(1), delta(1), epsilon(1). CF(0) has three main subunits: a(1), b(2) and c(9-12). The alpha and beta chains form an alternating ring which encloses part of the gamma chain. CF(1) is attached to CF(0) by a central stalk formed by the gamma and epsilon chains, while a peripheral stalk is formed by the delta and b chains.

The protein localises to the cell membrane. It catalyses the reaction ATP + H2O + 4 H(+)(in) = ADP + phosphate + 5 H(+)(out). Functionally, produces ATP from ADP in the presence of a proton gradient across the membrane. The alpha chain is a regulatory subunit. The polypeptide is ATP synthase subunit alpha (Desulfitobacterium hafniense (strain DSM 10664 / DCB-2)).